The following is a 152-amino-acid chain: Protein SprT-like (152 aa).

One can recognise a SprT-like domain in the interval 7-147 (QRLVEEVSLQ…CGKCKGKLKP (141 aa)). Histidine 67 is a binding site for Zn(2+). Glutamate 68 is a catalytic residue. Position 71 (histidine 71) interacts with Zn(2+).

It belongs to the SprT family. Requires Zn(2+) as cofactor.

It is found in the cytoplasm. This chain is Protein SprT-like, found in Bacillus cereus (strain G9842).